The primary structure comprises 353 residues: Protein MGF 360-13L (353 aa).

It belongs to the asfivirus MGF 360 family.

Plays a role in virus cell tropism, and may be required for efficient virus replication in macrophages. The protein is Protein MGF 360-13L of African swine fever virus (isolate Warthog/Namibia/Wart80/1980) (ASFV).